A 166-amino-acid polypeptide reads, in one-letter code: Large ribosomal subunit protein mL41 (166 aa).

The N-terminal 26 residues, 1-26, are a transit peptide targeting the mitochondrion; that stretch reads MQNCIKLVPLALKCPQRAISTSAVLD.

This sequence belongs to the mitochondrion-specific ribosomal protein mL41 family. In terms of assembly, component of the mitochondrial ribosome large subunit (39S) which comprises a 16S rRNA and about 50 distinct proteins.

The protein resides in the mitochondrion. In Drosophila pseudoobscura pseudoobscura (Fruit fly), this protein is Large ribosomal subunit protein mL41 (mRpL41).